The primary structure comprises 281 residues: Acetyl-coenzyme A carboxylase carboxyl transferase subunit beta (281 aa).

A CoA carboxyltransferase N-terminal domain is found at 24–281 (GLWYKSPKGK…TKLLTMLANN (258 aa)).

The protein belongs to the AccD/PCCB family. As to quaternary structure, acetyl-CoA carboxylase is a heterohexamer composed of biotin carboxyl carrier protein (AccB), biotin carboxylase (AccC) and two subunits each of ACCase subunit alpha (AccA) and ACCase subunit beta (AccD).

It localises to the cytoplasm. The catalysed reaction is N(6)-carboxybiotinyl-L-lysyl-[protein] + acetyl-CoA = N(6)-biotinyl-L-lysyl-[protein] + malonyl-CoA. The protein operates within lipid metabolism; malonyl-CoA biosynthesis; malonyl-CoA from acetyl-CoA: step 1/1. Its function is as follows. Component of the acetyl coenzyme A carboxylase (ACC) complex. Biotin carboxylase (BC) catalyzes the carboxylation of biotin on its carrier protein (BCCP) and then the CO(2) group is transferred by the transcarboxylase to acetyl-CoA to form malonyl-CoA. This is Acetyl-coenzyme A carboxylase carboxyl transferase subunit beta from Amoebophilus asiaticus (strain 5a2).